The primary structure comprises 454 residues: Probable DNA primase large subunit (454 aa).

Cys-280, Cys-359, Cys-375, and Cys-415 together coordinate [4Fe-4S] cluster.

This sequence belongs to the eukaryotic-type primase large subunit family. Heterodimer of a small subunit and a large subunit. It depends on [4Fe-4S] cluster as a cofactor.

Functionally, DNA primase is the polymerase that synthesizes small RNA primers for the Okazaki fragments made during discontinuous DNA replication. The protein is Probable DNA primase large subunit of Arabidopsis thaliana (Mouse-ear cress).